The chain runs to 426 residues: Cytochrome c biogenesis protein Ccs1 (426 aa).

3 consecutive transmembrane segments (helical) span residues 11–31 (LKFAIALLLLISITITFGSII), 70–90 (NFWFISLLLSLGISLIACTFF), and 153–173 (IAPVFVHLSIILILLGSIFAS).

Belongs to the Ccs1/CcsB family. May interact with CcsA.

Its subcellular location is the plastid. It is found in the chloroplast thylakoid membrane. Its function is as follows. Required during biogenesis of c-type cytochromes (cytochrome c6 and cytochrome f) at the step of heme attachment. The protein is Cytochrome c biogenesis protein Ccs1 of Heterosigma akashiwo (strain CCMP452 / OLISTH).